Consider the following 195-residue polypeptide: Triosephosphate isomerase, cytosolic (195 aa).

The active-site Electrophile is the histidine 37. Residue glutamate 107 is the Proton acceptor of the active site.

It belongs to the triosephosphate isomerase family. In terms of assembly, homodimer.

The protein resides in the cytoplasm. The catalysed reaction is D-glyceraldehyde 3-phosphate = dihydroxyacetone phosphate. It participates in carbohydrate biosynthesis; gluconeogenesis. Its pathway is carbohydrate degradation; glycolysis; D-glyceraldehyde 3-phosphate from glycerone phosphate: step 1/1. The chain is Triosephosphate isomerase, cytosolic from Lactuca sativa (Garden lettuce).